Consider the following 337-residue polypeptide: DNA-directed RNA polymerase subunit alpha (337 aa).

The interval 1-233 (MVREEVVGST…DLFIPFLHAE (233 aa)) is alpha N-terminal domain (alpha-NTD). Residues 265 to 337 (KEIALKCIFI…FAIDLPKNKF (73 aa)) form an alpha C-terminal domain (alpha-CTD) region.

This sequence belongs to the RNA polymerase alpha chain family. In terms of assembly, in plastids the minimal PEP RNA polymerase catalytic core is composed of four subunits: alpha, beta, beta', and beta''. When a (nuclear-encoded) sigma factor is associated with the core the holoenzyme is formed, which can initiate transcription.

Its subcellular location is the plastid. The protein resides in the chloroplast. It catalyses the reaction RNA(n) + a ribonucleoside 5'-triphosphate = RNA(n+1) + diphosphate. Its function is as follows. DNA-dependent RNA polymerase catalyzes the transcription of DNA into RNA using the four ribonucleoside triphosphates as substrates. This chain is DNA-directed RNA polymerase subunit alpha, found in Acorus gramineus (Dwarf sweet flag).